Consider the following 728-residue polypeptide: Prolyl 3-hydroxylase 1 (728 aa).

An N-terminal signal peptide occupies residues 1-14; the sequence is MVAVAAAAASRATA. 4 TPR repeats span residues 25 to 58, 135 to 168, 197 to 230, and 293 to 326; these read PDLLYAEGTAAYARGDWPGVVLNMERALRSRAAL, RSPYNYLQVAYFKINKLEKAVAAAHTFFVGNPEH, HMHEFRLGVRLYSEEKPLEAVPHLEAALQEYFVA, and PSHYNYLQFAYYNIGNYTQAIECAKTYLLFFPND. N308 carries an N-linked (GlcNAc...) asparagine glycan. Residues 393–431 adopt a coiled-coil conformation; the sequence is KRLQEKQKSERETAVRISQEIGNLMKEIETLVEEKTKES. 3 N-linked (GlcNAc...) asparagine glycosylation sites follow: N450, N459, and N532. Residues 556–670 form the Fe2OG dioxygenase domain; sequence SHLVCRTAIE…RCAIALWFTL (115 aa). Residues H579, D581, and H651 each contribute to the Fe cation site. Residue R661 is part of the active site. A disordered region spans residues 691-728; it reads SPEEVDLPQEQPLPDQQGSPKPGEESLSDRESQPKDEL. Over residues 698 to 707 the composition is skewed to low complexity; the sequence is PQEQPLPDQQ. Residues 712–728 show a composition bias toward basic and acidic residues; that stretch reads PGEESLSDRESQPKDEL. A Prevents secretion from ER motif is present at residues 725–728; the sequence is KDEL.

It belongs to the leprecan family. Requires Fe cation as cofactor. It depends on L-ascorbate as a cofactor. Post-translationally, O-glycosylated; chondroitin sulfate. In terms of tissue distribution, expressed in basement membranes of cardiac muscle, skeletal muscle, central nervous system, intestinal tract, trachea, ear, skin, liver and kidney. In kidney, localizes to the glomerular basement membrane, mesangial matrix and Bowman's capsule of the nephron. In the renal parenchyma, expressed in the basement membranes of tubules and blood vessels. In the ear and trachea, localizes to the perimeter of resident chondrocytes in lacunae.

The protein resides in the endoplasmic reticulum. It is found in the secreted. Its subcellular location is the extracellular space. It localises to the extracellular matrix. It carries out the reaction L-prolyl-[collagen] + 2-oxoglutarate + O2 = trans-3-hydroxy-L-prolyl-[collagen] + succinate + CO2. In terms of biological role, basement membrane-associated chondroitin sulfate proteoglycan (CSPG). Has prolyl 3-hydroxylase activity catalyzing the post-translational formation of 3-hydroxyproline in -Xaa-Pro-Gly- sequences in collagens, especially types IV and V. May be involved in the secretory pathway of cells. Has growth suppressive activity in fibroblasts. In Rattus norvegicus (Rat), this protein is Prolyl 3-hydroxylase 1.